The chain runs to 346 residues: Cell division protein ZipA (346 aa).

The Periplasmic segment spans residues Met-1 to Leu-6. Residues Val-7 to Ile-27 traverse the membrane as a helical segment. The Cytoplasmic portion of the chain corresponds to Arg-28–Ala-346. Disordered regions lie at residues Ala-76–Glu-103 and Gln-121–Pro-145.

The protein belongs to the ZipA family. In terms of assembly, interacts with FtsZ via their C-terminal domains.

The protein resides in the cell inner membrane. Its function is as follows. Essential cell division protein that stabilizes the FtsZ protofilaments by cross-linking them and that serves as a cytoplasmic membrane anchor for the Z ring. Also required for the recruitment to the septal ring of downstream cell division proteins. This Shewanella sp. (strain MR-4) protein is Cell division protein ZipA.